The primary structure comprises 257 residues: tRNA pseudouridine synthase A (257 aa).

Asp53 (nucleophile) is an active-site residue. Tyr111 provides a ligand contact to substrate.

Belongs to the tRNA pseudouridine synthase TruA family. Homodimer.

It carries out the reaction uridine(38/39/40) in tRNA = pseudouridine(38/39/40) in tRNA. Its function is as follows. Formation of pseudouridine at positions 38, 39 and 40 in the anticodon stem and loop of transfer RNAs. This Xanthomonas euvesicatoria pv. vesicatoria (strain 85-10) (Xanthomonas campestris pv. vesicatoria) protein is tRNA pseudouridine synthase A.